Reading from the N-terminus, the 113-residue chain is Ribonuclease P protein component (113 aa).

The protein belongs to the RnpA family. In terms of assembly, consists of a catalytic RNA component (M1 or rnpB) and a protein subunit.

The enzyme catalyses Endonucleolytic cleavage of RNA, removing 5'-extranucleotides from tRNA precursor.. RNaseP catalyzes the removal of the 5'-leader sequence from pre-tRNA to produce the mature 5'-terminus. It can also cleave other RNA substrates such as 4.5S RNA. The protein component plays an auxiliary but essential role in vivo by binding to the 5'-leader sequence and broadening the substrate specificity of the ribozyme. This Finegoldia magna (strain ATCC 29328 / DSM 20472 / WAL 2508) (Peptostreptococcus magnus) protein is Ribonuclease P protein component.